Consider the following 377-residue polypeptide: Queuine tRNA-ribosyltransferase (377 aa).

The active-site Proton acceptor is Asp89. Residues 89–93, Asp143, Gln188, and Gly215 contribute to the substrate site; that span reads DSGGF. An RNA binding region spans residues 246–252; that stretch reads GVGKPED. Asp265 (nucleophile) is an active-site residue. The tract at residues 270–274 is RNA binding; important for wobble base 34 recognition; that stretch reads TRNAR. Residues Cys303, Cys305, Cys308, and His334 each contribute to the Zn(2+) site.

It belongs to the queuine tRNA-ribosyltransferase family. In terms of assembly, homodimer. Within each dimer, one monomer is responsible for RNA recognition and catalysis, while the other monomer binds to the replacement base PreQ1. Zn(2+) is required as a cofactor.

The enzyme catalyses 7-aminomethyl-7-carbaguanine + guanosine(34) in tRNA = 7-aminomethyl-7-carbaguanosine(34) in tRNA + guanine. Its pathway is tRNA modification; tRNA-queuosine biosynthesis. In terms of biological role, catalyzes the base-exchange of a guanine (G) residue with the queuine precursor 7-aminomethyl-7-deazaguanine (PreQ1) at position 34 (anticodon wobble position) in tRNAs with GU(N) anticodons (tRNA-Asp, -Asn, -His and -Tyr). Catalysis occurs through a double-displacement mechanism. The nucleophile active site attacks the C1' of nucleotide 34 to detach the guanine base from the RNA, forming a covalent enzyme-RNA intermediate. The proton acceptor active site deprotonates the incoming PreQ1, allowing a nucleophilic attack on the C1' of the ribose to form the product. After dissociation, two additional enzymatic reactions on the tRNA convert PreQ1 to queuine (Q), resulting in the hypermodified nucleoside queuosine (7-(((4,5-cis-dihydroxy-2-cyclopenten-1-yl)amino)methyl)-7-deazaguanosine). The protein is Queuine tRNA-ribosyltransferase of Acinetobacter baumannii (strain SDF).